A 349-amino-acid chain; its full sequence is MIAFDQLTWLHGKPQSSGLLKANPEDFLVVEDLGFAPDGEGEHVLVRILKNGCNTRFVADALAKFLKIHAREVSFAGQKDKHAVTEQWLCARVPGKEMPDLSKFQLEGCQVLEYARHKRKLRLGALKGNQFTVILREISDRQDVETRLQAIAERGVPNYFGAQRFGIGGSNLQGALRWAESGAPVRDRNKRSFWLSAARSALFNQQVSIRLKKTEFNQVVDGDALQLAGRGSWFVVTPEELEVSQARVHNRELMITATLPGSGDWGSQRDALAFEQAAIAEETALQALLVREKVEAARRAMLLYPQQLSWNWWDDVTVELRFWLPAGSFATSVVRELINTTGDYANIAE.

Phe-27 contributes to the substrate binding site. Residue Asp-80 is the Nucleophile of the active site. Asn-129 lines the substrate pocket. In terms of domain architecture, TRUD spans 155 to 303 (GVPNYFGAQR…VEAARRAMLL (149 aa)). Phe-329 contributes to the substrate binding site.

This sequence belongs to the pseudouridine synthase TruD family.

It carries out the reaction uridine(13) in tRNA = pseudouridine(13) in tRNA. Functionally, responsible for synthesis of pseudouridine from uracil-13 in transfer RNAs. The chain is tRNA pseudouridine synthase D from Klebsiella pneumoniae subsp. pneumoniae (strain ATCC 700721 / MGH 78578).